Consider the following 152-residue polypeptide: SsrA-binding protein (152 aa).

Belongs to the SmpB family.

The protein resides in the cytoplasm. Required for rescue of stalled ribosomes mediated by trans-translation. Binds to transfer-messenger RNA (tmRNA), required for stable association of tmRNA with ribosomes. tmRNA and SmpB together mimic tRNA shape, replacing the anticodon stem-loop with SmpB. tmRNA is encoded by the ssrA gene; the 2 termini fold to resemble tRNA(Ala) and it encodes a 'tag peptide', a short internal open reading frame. During trans-translation Ala-aminoacylated tmRNA acts like a tRNA, entering the A-site of stalled ribosomes, displacing the stalled mRNA. The ribosome then switches to translate the ORF on the tmRNA; the nascent peptide is terminated with the 'tag peptide' encoded by the tmRNA and targeted for degradation. The ribosome is freed to recommence translation, which seems to be the essential function of trans-translation. This Rickettsia felis (strain ATCC VR-1525 / URRWXCal2) (Rickettsia azadi) protein is SsrA-binding protein.